A 210-amino-acid polypeptide reads, in one-letter code: HTH-type transcriptional regulator MtrR (210 aa).

The region spanning 9–69 is the HTH tetR-type domain; sequence LKTKEHLMLA…ALFQRICDDI (61 aa). A DNA-binding region (H-T-H motif) is located at residues 32 to 51; the sequence is SLNEIAQAAGVTRGALYWHF.

Homodimer. Binds to DNA as a pair of dimers.

DNA binding is affected significantly by increasing the NaCl concentration. Its function is as follows. Controls the permeability of the cell envelope to hydrophobic compounds such as antibiotics and detergents. Represses transcription of the mtrCDE-encoded efflux pump by binding within the mtrCDE promoter. Also negatively regulates the expression of farR, by binding to its promoter region, leading indirectly to the positive regulation of expression of the farAB-encoded efflux pump. In Neisseria gonorrhoeae, this protein is HTH-type transcriptional regulator MtrR.